Consider the following 479-residue polypeptide: Ribosomal RNA small subunit methyltransferase F (479 aa).

S-adenosyl-L-methionine is bound by residues 125–131, E149, D176, and D194; that span reads AAAPGSK. Residue C247 is the Nucleophile of the active site.

Belongs to the class I-like SAM-binding methyltransferase superfamily. RsmB/NOP family.

Its subcellular location is the cytoplasm. The catalysed reaction is cytidine(1407) in 16S rRNA + S-adenosyl-L-methionine = 5-methylcytidine(1407) in 16S rRNA + S-adenosyl-L-homocysteine + H(+). In terms of biological role, specifically methylates the cytosine at position 1407 (m5C1407) of 16S rRNA. The sequence is that of Ribosomal RNA small subunit methyltransferase F from Salmonella newport (strain SL254).